A 209-amino-acid polypeptide reads, in one-letter code: Urease accessory protein UreG (209 aa).

Gly-10–Thr-17 lines the GTP pocket.

Belongs to the SIMIBI class G3E GTPase family. UreG subfamily. In terms of assembly, homodimer. UreD, UreF and UreG form a complex that acts as a GTP-hydrolysis-dependent molecular chaperone, activating the urease apoprotein by helping to assemble the nickel containing metallocenter of UreC. The UreE protein probably delivers the nickel.

Its subcellular location is the cytoplasm. Facilitates the functional incorporation of the urease nickel metallocenter. This process requires GTP hydrolysis, probably effectuated by UreG. The polypeptide is Urease accessory protein UreG (Lysinibacillus sphaericus (strain C3-41)).